Consider the following 398-residue polypeptide: Phosphoglycerate kinase (398 aa).

Residues 21 to 23 (DFN), R36, 59 to 62 (HLGR), R119, and R157 contribute to the substrate site. ATP is bound by residues K208, G296, E327, and 354–357 (GGDS).

Belongs to the phosphoglycerate kinase family. Monomer.

Its subcellular location is the cytoplasm. The catalysed reaction is (2R)-3-phosphoglycerate + ATP = (2R)-3-phospho-glyceroyl phosphate + ADP. Its pathway is carbohydrate degradation; glycolysis; pyruvate from D-glyceraldehyde 3-phosphate: step 2/5. The protein is Phosphoglycerate kinase of Streptococcus pneumoniae serotype 4 (strain ATCC BAA-334 / TIGR4).